The chain runs to 130 residues: Small ribosomal subunit protein uS11c (130 aa).

It belongs to the universal ribosomal protein uS11 family. In terms of assembly, part of the 30S ribosomal subunit.

Its subcellular location is the plastid. It localises to the chloroplast. The protein is Small ribosomal subunit protein uS11c of Tetradesmus obliquus (Green alga).